The chain runs to 465 residues: ATP synthase subunit beta (465 aa).

An ATP-binding site is contributed by glycine 148–threonine 155.

This sequence belongs to the ATPase alpha/beta chains family. As to quaternary structure, F-type ATPases have 2 components, CF(1) - the catalytic core - and CF(0) - the membrane proton channel. CF(1) has five subunits: alpha(3), beta(3), gamma(1), delta(1), epsilon(1). CF(0) has three main subunits: a(1), b(2) and c(9-12). The alpha and beta chains form an alternating ring which encloses part of the gamma chain. CF(1) is attached to CF(0) by a central stalk formed by the gamma and epsilon chains, while a peripheral stalk is formed by the delta and b chains.

The protein localises to the cell inner membrane. The enzyme catalyses ATP + H2O + 4 H(+)(in) = ADP + phosphate + 5 H(+)(out). Its function is as follows. Produces ATP from ADP in the presence of a proton gradient across the membrane. The catalytic sites are hosted primarily by the beta subunits. This chain is ATP synthase subunit beta, found in Chromobacterium violaceum (strain ATCC 12472 / DSM 30191 / JCM 1249 / CCUG 213 / NBRC 12614 / NCIMB 9131 / NCTC 9757 / MK).